Consider the following 388-residue polypeptide: Ferrochelatase (388 aa).

H197 and E278 together coordinate Fe cation.

Belongs to the ferrochelatase family.

It is found in the cytoplasm. It catalyses the reaction heme b + 2 H(+) = protoporphyrin IX + Fe(2+). It participates in porphyrin-containing compound metabolism; protoheme biosynthesis; protoheme from protoporphyrin-IX: step 1/1. Catalyzes the ferrous insertion into protoporphyrin IX. The sequence is that of Ferrochelatase from Thermosynechococcus vestitus (strain NIES-2133 / IAM M-273 / BP-1).